The sequence spans 263 residues: Zinc transporter ZupT (263 aa).

A run of 5 helical transmembrane segments spans residues 1-21, 37-57, 68-88, 116-136, and 138-158; these read MLFA…GGLI, LGFS…PGAF, GGSW…AIID, MMKM…PEGF, and TFLA…AIAI. Residues asparagine 131 and glutamate 134 each coordinate Fe(2+). Glutamate 134 provides a ligand contact to Zn(2+). A Zn(2+)-binding site is contributed by histidine 159. 3 residues coordinate Fe(2+): asparagine 160, glutamate 163, and glutamate 192. Glutamate 163 serves as a coordination point for Zn(2+). Helical transmembrane passes span 184 to 204, 206 to 226, and 243 to 263; these read WATL…LLLM, FIGP…MVFI, and TAIY…LLFI.

Belongs to the ZIP transporter (TC 2.A.5) family. ZupT subfamily.

The protein localises to the cell membrane. It catalyses the reaction Zn(2+)(in) = Zn(2+)(out). Its function is as follows. Mediates zinc uptake. May also transport other divalent cations. This is Zinc transporter ZupT from Corynebacterium glutamicum (strain ATCC 13032 / DSM 20300 / JCM 1318 / BCRC 11384 / CCUG 27702 / LMG 3730 / NBRC 12168 / NCIMB 10025 / NRRL B-2784 / 534).